We begin with the raw amino-acid sequence, 306 residues long: Protodermal factor 1 (306 aa).

An N-terminal signal peptide occupies residues 1–23 (MRGMVSFAVWALFAALLSQQLFA). Over residues 40 to 56 (PPSGSHGTPPSHTPPSS) the composition is skewed to low complexity. Residues 40–156 (PPSGSHGTPP…VVTPPSPIVD (117 aa)) form a disordered region. Residues 62 to 83 (PYDPSPSTPSHPSPPSHTPTPS) show a composition bias toward pro residues. The span at 84 to 99 (TPSHTPTPHTPSHTPT) shows a compositional bias: low complexity. Pro residues predominate over residues 139-154 (SPPPRTPVVVTPPSPI).

Confined to the shoot apical meristem (SAM) at the layer L1 in vegetative, infloresence and floral meristems, as well as in protoderm of organ primordia, including during embryogenesis. Also present in the tip of emerging lateral root primordia.

In terms of biological role, may be involved in the regulation of meristem growth. In Arabidopsis thaliana (Mouse-ear cress), this protein is Protodermal factor 1 (PDF1).